A 1259-amino-acid chain; its full sequence is Bud site selection protein 4 homolog (1259 aa).

3 disordered regions span residues 185–416 (YDRG…MVKP), 428–455 (LHLG…DAMK), and 862–902 (SGLG…KKRT). The span at 247-267 (ATDKRSLTDKTVPDNRGENER) shows a compositional bias: basic and acidic residues. Residues 277–289 (RNPSIETGTTDEY) are compositionally biased toward polar residues. Basic and acidic residues-rich tracts occupy residues 305 to 324 (DDSK…KPQR) and 368 to 391 (IRDR…DHEL). The span at 397–411 (SARTNSSASGNSSDS) shows a compositional bias: low complexity. The PH domain maps to 1128 to 1239 (AIAMEGFMWQ…WIEKLRKVIE (112 aa)).

It belongs to the BUD4 family.

Its subcellular location is the cell septum. In terms of biological role, may be involved in the septin organization at the site of septation. In Eremothecium gossypii (strain ATCC 10895 / CBS 109.51 / FGSC 9923 / NRRL Y-1056) (Yeast), this protein is Bud site selection protein 4 homolog (BUD4).